The primary structure comprises 274 residues: Thiamine kinase (274 aa).

It belongs to the thiamine kinase family.

It catalyses the reaction thiamine + ATP = thiamine phosphate + ADP + H(+). The protein operates within cofactor biosynthesis; thiamine diphosphate biosynthesis; thiamine phosphate from thiamine: step 1/1. Catalyzes the ATP-dependent phosphorylation of thiamine to thiamine phosphate. Is involved in thiamine salvage. This is Thiamine kinase from Escherichia coli O9:H4 (strain HS).